The sequence spans 401 residues: Bone morphogenetic protein 4 (401 aa).

The first 19 residues, 1-19, serve as a signal peptide directing secretion; that stretch reads MIPGNRMLMVILLSQVLLG. Residues 20 to 287 constitute a propeptide that is removed on maturation; the sequence is GTNYASLIPD…GHALTRRSKR (268 aa). Residues N141, N204, and N238 are each glycosylated (N-linked (GlcNAc...) asparagine). The tract at residues 279–299 is disordered; it reads HALTRRSKRSPKQQRPRKKNK. Basic residues predominate over residues 280 to 299; that stretch reads ALTRRSKRSPKQQRPRKKNK. Disulfide bonds link C301-C366, C330-C398, and C334-C400. N-linked (GlcNAc...) asparagine glycosylation is found at N343 and N358.

This sequence belongs to the TGF-beta family. In terms of assembly, homodimer; disulfide-linked. Forms heterodimers with the TGF-beta family member derriere. Part of a complex consisting of twsg1 and chrd. Interacts with tsku.

It is found in the secreted. The protein localises to the extracellular space. Its subcellular location is the extracellular matrix. In terms of biological role, posterior-ventralizing factor in Xenopus mesoderm induction. Induces posteroventral mesoderm and counteracts dorsalizing signals such as activin. The protein is Bone morphogenetic protein 4 (bmp4) of Xenopus laevis (African clawed frog).